A 1219-amino-acid polypeptide reads, in one-letter code: ATP-dependent helicase/nuclease subunit A (1219 aa).

The UvrD-like helicase ATP-binding domain occupies 12-477; sequence TRWTDNQWKS…IDLSQNFRSR (466 aa). An ATP-binding site is contributed by 33 to 40; it reads AAAGSGKT. Residues 478-786 form the UvrD-like helicase C-terminal domain; that stretch reads EEVLTTTNYL…RMMTIHSSKG (309 aa). The segment at 997-1016 is disordered; that stretch reads PSKQSVSELKRQHETEQSDT. A compositionally biased stretch (basic and acidic residues) spans 1004–1016; that stretch reads ELKRQHETEQSDT.

This sequence belongs to the helicase family. AddA subfamily. In terms of assembly, heterodimer of AddA and AddB/RexB. Mg(2+) is required as a cofactor.

The enzyme catalyses Couples ATP hydrolysis with the unwinding of duplex DNA by translocating in the 3'-5' direction.. It carries out the reaction ATP + H2O = ADP + phosphate + H(+). In terms of biological role, the heterodimer acts as both an ATP-dependent DNA helicase and an ATP-dependent, dual-direction single-stranded exonuclease. Recognizes the chi site generating a DNA molecule suitable for the initiation of homologous recombination. The AddA nuclease domain is required for chi fragment generation; this subunit has the helicase and 3' -&gt; 5' nuclease activities. This chain is ATP-dependent helicase/nuclease subunit A, found in Staphylococcus saprophyticus subsp. saprophyticus (strain ATCC 15305 / DSM 20229 / NCIMB 8711 / NCTC 7292 / S-41).